We begin with the raw amino-acid sequence, 487 residues long: Bifunctional protein HldE (487 aa).

The tract at residues 1 to 329 (MLHAVETAFY…GALLTDATYE (329 aa)) is ribokinase. 204–207 (NRGE) contributes to the ATP binding site. Aspartate 274 is an active-site residue. The segment at 356–487 (FTNGCFDLLH…GIVQRISAQK (132 aa)) is cytidylyltransferase.

It in the N-terminal section; belongs to the carbohydrate kinase PfkB family. The protein in the C-terminal section; belongs to the cytidylyltransferase family. Homodimer.

It carries out the reaction D-glycero-beta-D-manno-heptose 7-phosphate + ATP = D-glycero-beta-D-manno-heptose 1,7-bisphosphate + ADP + H(+). The catalysed reaction is D-glycero-beta-D-manno-heptose 1-phosphate + ATP + H(+) = ADP-D-glycero-beta-D-manno-heptose + diphosphate. It participates in nucleotide-sugar biosynthesis; ADP-L-glycero-beta-D-manno-heptose biosynthesis; ADP-L-glycero-beta-D-manno-heptose from D-glycero-beta-D-manno-heptose 7-phosphate: step 1/4. It functions in the pathway nucleotide-sugar biosynthesis; ADP-L-glycero-beta-D-manno-heptose biosynthesis; ADP-L-glycero-beta-D-manno-heptose from D-glycero-beta-D-manno-heptose 7-phosphate: step 3/4. In terms of biological role, catalyzes the phosphorylation of D-glycero-D-manno-heptose 7-phosphate at the C-1 position to selectively form D-glycero-beta-D-manno-heptose-1,7-bisphosphate. Functionally, catalyzes the ADP transfer from ATP to D-glycero-beta-D-manno-heptose 1-phosphate, yielding ADP-D-glycero-beta-D-manno-heptose. This Magnetococcus marinus (strain ATCC BAA-1437 / JCM 17883 / MC-1) protein is Bifunctional protein HldE.